The chain runs to 304 residues: Large ribosomal subunit protein uL18y (304 aa).

The protein belongs to the universal ribosomal protein uL18 family. As to quaternary structure, component of the large ribosomal subunit (LSU).

It is found in the cytoplasm. The protein resides in the nucleus. Component of the ribosome, a large ribonucleoprotein complex responsible for the synthesis of proteins in the cell. The small ribosomal subunit (SSU) binds messenger RNAs (mRNAs) and translates the encoded message by selecting cognate aminoacyl-transfer RNA (tRNA) molecules. The large subunit (LSU) contains the ribosomal catalytic site termed the peptidyl transferase center (PTC), which catalyzes the formation of peptide bonds, thereby polymerizing the amino acids delivered by tRNAs into a polypeptide chain. The nascent polypeptides leave the ribosome through a tunnel in the LSU and interact with protein factors that function in enzymatic processing, targeting, and the membrane insertion of nascent chains at the exit of the ribosomal tunnel. In Oryza sativa subsp. japonica (Rice), this protein is Large ribosomal subunit protein uL18y (RPL5B).